Here is a 329-residue protein sequence, read N- to C-terminus: Carbohydrate sulfotransferase chst-1 (329 aa).

Over 1 to 3 (MLK) the chain is Cytoplasmic. A helical; Signal-anchor for type II membrane protein membrane pass occupies residues 4–23 (WFIISCCLLTAISYSTYYLF). Residues 24–329 (TSNSWIKTVK…FDFDTTFINS (306 aa)) are Lumenal-facing. 3'-phosphoadenylyl sulfate contacts are provided by residues 91 to 97 (KKSMSTL) and 157 to 165 (RDPIARFIS).

Belongs to the sulfotransferase 2 family. In terms of tissue distribution, highly expressed in the head and tail of hermaphrodites, in particular in amphid and phasmid sheath cells.

It localises to the golgi apparatus membrane. The enzyme catalyses chondroitin beta-D-glucuronate + n 3'-phosphoadenylyl sulfate = chondroitin 4'-sulfate + n adenosine 3',5'-bisphosphate + n H(+). Its function is as follows. Catalyzes the transfer of sulfate to position 4 of non-reducing N-acetylgalactosamine (GalNAc) residue of chondroitin. The sequence is that of Carbohydrate sulfotransferase chst-1 from Caenorhabditis elegans.